The sequence spans 596 residues: UvrABC system protein C (596 aa).

Residues 14–91 form the GIY-YIG domain; that stretch reads QQPGCYLMKD…IKKYDPRYNV (78 aa). In terms of domain architecture, UVR spans 196-231; the sequence is KDIRKNLAGEMQKASEALNFERAKEIRDTIQHIDAT.

The protein belongs to the UvrC family. As to quaternary structure, interacts with UvrB in an incision complex.

It localises to the cytoplasm. Its function is as follows. The UvrABC repair system catalyzes the recognition and processing of DNA lesions. UvrC both incises the 5' and 3' sides of the lesion. The N-terminal half is responsible for the 3' incision and the C-terminal half is responsible for the 5' incision. The polypeptide is UvrABC system protein C (Oceanobacillus iheyensis (strain DSM 14371 / CIP 107618 / JCM 11309 / KCTC 3954 / HTE831)).